A 349-amino-acid chain; its full sequence is Fructose-bisphosphate aldolase 2, chloroplastic (349 aa).

The substrate site is built by Arg-47 and Lys-137. The Proton acceptor role is filled by Glu-177. Lys-219 acts as the Schiff-base intermediate with dihydroxyacetone-P in catalysis.

Belongs to the class I fructose-bisphosphate aldolase family.

It localises to the plastid. The protein resides in the chloroplast. The catalysed reaction is beta-D-fructose 1,6-bisphosphate = D-glyceraldehyde 3-phosphate + dihydroxyacetone phosphate. Its pathway is carbohydrate degradation; glycolysis; D-glyceraldehyde 3-phosphate and glycerone phosphate from D-glucose: step 4/4. This Pisum sativum (Garden pea) protein is Fructose-bisphosphate aldolase 2, chloroplastic.